The primary structure comprises 200 residues: MAKVQILNMVVLDNPCPFHNPFQFEITFECIEDLPDDLEWKIIYVGSAESEEYDQVLDSVLVGPVPAGRHMFVFQADAPNSSLIPESDAVGVTVVLITCTYRGQEFIRVGYYVNNEYSDPELRENPPLKPHFGQLQRNILASNPRVTRFHINWECASEAKMEDIENVDPASNAMLPPNCAPSKGLAAALNPIPENSMDCM.

The protein belongs to the ASF1 family. In terms of assembly, interacts with histone H3 and histone H4.

The protein resides in the nucleus. Histone chaperone that facilitates histone deposition and histone exchange and removal during nucleosome assembly and disassembly. This Xenopus tropicalis (Western clawed frog) protein is Histone chaperone asf1b (asf1b).